Reading from the N-terminus, the 195-residue chain is ATP-dependent Clp protease proteolytic subunit (195 aa).

Serine 99 acts as the Nucleophile in catalysis. Histidine 124 is a catalytic residue.

This sequence belongs to the peptidase S14 family. Fourteen ClpP subunits assemble into 2 heptameric rings which stack back to back to give a disk-like structure with a central cavity, resembling the structure of eukaryotic proteasomes.

It is found in the cytoplasm. It catalyses the reaction Hydrolysis of proteins to small peptides in the presence of ATP and magnesium. alpha-casein is the usual test substrate. In the absence of ATP, only oligopeptides shorter than five residues are hydrolyzed (such as succinyl-Leu-Tyr-|-NHMec, and Leu-Tyr-Leu-|-Tyr-Trp, in which cleavage of the -Tyr-|-Leu- and -Tyr-|-Trp bonds also occurs).. Functionally, cleaves peptides in various proteins in a process that requires ATP hydrolysis. Has a chymotrypsin-like activity. Plays a major role in the degradation of misfolded proteins. This chain is ATP-dependent Clp protease proteolytic subunit, found in Carboxydothermus hydrogenoformans (strain ATCC BAA-161 / DSM 6008 / Z-2901).